The primary structure comprises 298 residues: Plasmodesmata-located protein 7 (298 aa).

Residues 1 to 30 form the signal peptide; the sequence is MPMAKLRNIIKTLSIFFFLIAATAPSLSSA. Topologically, residues 31–258 are extracellular; it reads TSATDTFVFG…YKTNYGGEKT (228 aa). Gnk2-homologous domains are found at residues 35-139 and 140-240; these read DTFV…NISF and LGQE…TDGA. 6 cysteine pairs are disulfide-bonded: C42–C117, C93–C102, C105–C130, C152–C218, C194–C203, and C206–C231. Residues 259–279 traverse the membrane as a helical segment; the sequence is FAIIIGLLAAVVLLIIFLLFL. Positions 259–279 are necessary and sufficient for plasmodesmal targeting; that stretch reads FAIIIGLLAAVVLLIIFLLFL. Topologically, residues 280–298 are cytoplasmic; sequence RGVCSRGGDFSILHSFTLI.

This sequence belongs to the cysteine-rich repeat secretory protein family. Plasmodesmata-located proteins (PDLD) subfamily. In terms of assembly, (Microbial infection) Interacts with Grapevine fanleaf virus (GFLV) 2B-MP. In terms of tissue distribution, highly expressed in lateral root and elongation zone.

It is found in the cell membrane. The protein localises to the cell junction. It localises to the plasmodesma. Functionally, modulates cell-to-cell trafficking. In Arabidopsis thaliana (Mouse-ear cress), this protein is Plasmodesmata-located protein 7.